Consider the following 229-residue polypeptide: Secretory carrier-associated membrane protein 4 (229 aa).

At 1-39 the chain is on the cytoplasmic side; the sequence is MSEKENNFPPLPKFIPVKPCFYQNFSDEIPVEHQVLVKR. A run of 4 helical transmembrane segments spans residues 40 to 60, 61 to 81, 105 to 125, and 149 to 169; these read IYRL…ACLA, WWIG…LLLF, FMAF…QAIG, and VVML…AIAI. The Cytoplasmic segment spans residues 170–229; sequence MKVHRIYRGAGGSFQKAQTEWNTGTWRNPPSREAQYNNFSGNSLPEYPTVPSYPGSGQWP. Threonine 194 bears the Phosphothreonine mark. The disordered stretch occupies residues 208–229; sequence FSGNSLPEYPTVPSYPGSGQWP.

Belongs to the SCAMP family.

It localises to the membrane. Functionally, probably involved in membrane protein trafficking. The protein is Secretory carrier-associated membrane protein 4 (SCAMP4) of Pongo abelii (Sumatran orangutan).